We begin with the raw amino-acid sequence, 309 residues long: Olfactory receptor 1A1 (309 aa).

At 1-25 (MRENNQSSTLEFILLGVTGQQEQED) the chain is on the extracellular side. N-linked (GlcNAc...) asparagine glycosylation is present at Asn-5. Residues 26-49 (FFYILFLFIYPITLIGNLLIVLAI) form a helical membrane-spanning segment. Residues 50 to 57 (CSDVHLHN) lie on the Cytoplasmic side of the membrane. Residues 58 to 79 (PMYFLLANLSLVDIFFSSVTIP) form a helical membrane-spanning segment. The Extracellular segment spans residues 80–100 (KMLANHLLGSKSISFGGCLTQ). Cys-97 and Cys-189 form a disulfide bridge. Residues 101–120 (MYFMIALGNTDSYILAAMAY) form a helical membrane-spanning segment. Residues 121 to 139 (DRAVAISRPLHYTTIMSPR) are Cytoplasmic-facing. A helical transmembrane segment spans residues 140-158 (SCIWLIAGSWVIGNANALP). Over 159–195 (HTLLTASLSFCGNQEVANFYCDITPLLKLSCSDIHFH) the chain is Extracellular. The chain crosses the membrane as a helical span at residues 196 to 218 (VKMMYLGVGIFSVPLLCIIVSYI). The Cytoplasmic segment spans residues 219 to 235 (RVFSTVFQVPSTKGVLK). The chain crosses the membrane as a helical span at residues 236-258 (AFSTCGSHLTVVSLYYGTVMGMY). At 259–270 (FRPLTNYSLKDA) the chain is on the extracellular side. Asn-264 carries N-linked (GlcNAc...) asparagine glycosylation. The chain crosses the membrane as a helical span at residues 271-290 (VITVMYTAVTPMLNPFIYSL). The Cytoplasmic segment spans residues 291–309 (RNRDVKAALRKLFNKRISS).

This sequence belongs to the G-protein coupled receptor 1 family.

Its subcellular location is the cell membrane. Odorant receptor. The chain is Olfactory receptor 1A1 (OR1A1) from Pan troglodytes (Chimpanzee).